The sequence spans 700 residues: Long-chain-fatty-acid--CoA ligase 1 (700 aa).

Positions 1-21 (MVAQYTVPVGKAANEHETAPR) are disordered. Lysine 189 is covalently cross-linked (Glycyl lysine isopeptide (Lys-Gly) (interchain with G-Cter in ubiquitin)). 269-280 (YTSGSTGEPKGV) provides a ligand contact to ATP. The FACS signature appears at 531 to 580 (DGWFKTGDIGEWEANGHLKIIDRKKNLVKTMNGEYIALEKLESVYRSNEY).

It belongs to the ATP-dependent AMP-binding enzyme family. Interacts with FAT1. The cofactor is Mg(2+).

It localises to the lipid droplet. The protein resides in the cell membrane. The catalysed reaction is a long-chain fatty acid + ATP + CoA = a long-chain fatty acyl-CoA + AMP + diphosphate. It catalyses the reaction (9Z)-octadecenoate + ATP + CoA = (9Z)-octadecenoyl-CoA + AMP + diphosphate. The enzyme catalyses hexadecanoate + ATP + CoA = hexadecanoyl-CoA + AMP + diphosphate. It carries out the reaction (9Z)-hexadecenoate + ATP + CoA = (9Z)-hexadecenoyl-CoA + AMP + diphosphate. The catalysed reaction is tetradecanoate + ATP + CoA = tetradecanoyl-CoA + AMP + diphosphate. It catalyses the reaction (9Z)-tetradecenoate + ATP + CoA = (9Z)-tetradecenoyl-CoA + AMP + diphosphate. The enzyme catalyses (9Z,12Z)-octadecadienoate + ATP + CoA = (9Z,12Z)-octadecadienoyl-CoA + AMP + diphosphate. It carries out the reaction dodecanoate + ATP + CoA = dodecanoyl-CoA + AMP + diphosphate. The catalysed reaction is pentadecanoate + ATP + CoA = pentadecanoyl-CoA + AMP + diphosphate. It catalyses the reaction undecanoate + ATP + CoA = undecanoyl-CoA + AMP + diphosphate. The enzyme catalyses heptadecanoate + ATP + CoA = heptadecanoyl-CoA + AMP + diphosphate. It carries out the reaction octadecanoate + ATP + CoA = octadecanoyl-CoA + AMP + diphosphate. Its function is as follows. Activates long-chain fatty acids (LCFA) by esterification of the fatty acids into metabolically active CoA-thioesters for subsequent degradation or incorporation into phospholipids. Also facilitates the transport of LCFAs into the cell, either by active transport or by decreasing the intracellular LCFA concentration. It may supplement intracellular myristoyl-CoA pools from exogenous myristate. Preferentially acts on C12:0-C16:0 fatty acids with myristic and pentadecanic acid (C15:0) having the highest activities. Also involved in long-chain base (LCB) uptake of sphingolipids. In contrast ot LCFA uptake, LCB uptake does not require ATP, suggesting that the enzyme is directly involved in active LCB uptake. Involved in the sphingolipid-to-glycerolipid metabolic pathway, converting the sphingolipid metabolite hexadecenoic acid to hexadecenoyl-CoA, which is then further converted to glycerolipids. The polypeptide is Long-chain-fatty-acid--CoA ligase 1 (FAA1) (Saccharomyces cerevisiae (strain ATCC 204508 / S288c) (Baker's yeast)).